A 438-amino-acid chain; its full sequence is ATP-dependent RNA helicase SUB2 (438 aa).

The span at 1-19 (MSHEGEEDLLEYSDNEQEI) shows a compositional bias: acidic residues. Residues 1–44 (MSHEGEEDLLEYSDNEQEIQVDNTKATEVAGNGEEAADGKDGDK) form a disordered region. The Q motif signature appears at 54 to 82 (TGFKDFLLKPELSRAIIDCGFEHPSEVQQ). Residues 85 to 260 (IPQSIHGTDV…RRFLQNPLEI (176 aa)) form the Helicase ATP-binding domain. 98–105 (AKSGLGKT) serves as a coordination point for ATP. A DECD box motif is present at residues 207-210 (DECD). Positions 272–433 (GLQQYYIRLE…EFPEEGVDPS (162 aa)) constitute a Helicase C-terminal domain.

The protein belongs to the DEAD box helicase family. DECD subfamily.

It is found in the nucleus. The catalysed reaction is ATP + H2O = ADP + phosphate + H(+). In terms of biological role, ATP-binding RNA helicase involved in transcription elongation and required for the export of mRNA out of the nucleus. SUB2 also plays a role in pre-mRNA splicing and spliceosome assembly. May be involved in rDNA and telomeric silencing, and maintenance of genome integrity. The chain is ATP-dependent RNA helicase SUB2 (SUB2) from Eremothecium gossypii (strain ATCC 10895 / CBS 109.51 / FGSC 9923 / NRRL Y-1056) (Yeast).